The sequence spans 551 residues: MAAEAKNDEQQDIARRLAKFPSTIWGCSFASFSLKDSEIESYTQQVEELKGKVKDMLMQSTKEITQNIEVINLLCRLGVSYHFESEIEQQLNLIFASLPSFLNDNGHLDLYTVALLFRVLRQHGRKVPCDVFNKYKDDNGEFKKDITSDVKGLLSLYEASVVSVHGEEILDEALVFTKQHLETLAAQVSPHFEQHIRNALLCPVHYGMERLQARLYISFYEEDESRNEILLKFAKLDFNRLQLLYREELAIVSRWWKDLDLTERLSYARDRIVEVYVWALGCVGSQPQFASSRLLVAKFTQTAMTVDDTYDAYGTIGELRLFTAAFERCSIDAIHELPEYMQYLYKAILKLFEETENDANEGSSYKTSYAKEMFKELTRADLQEGEWFNSLYVPAFDEYLHNASITTTGELLTAAFLLGLKEASMKEIVWVRDAPKIVRNAKLFARLLDDVATHEEEQKRGDCPSSVECYMNEYGVPKEKAYEEIKKILATSWKDINEDYMKQHRVSRTVVNYFINFARMSNFVYKVRDAYTYSTHLKTYVATLFLQPLPV.

Mg(2+)-binding residues include Asp307, Asp311, and Glu457. The DDXXD motif signature appears at 307-311; the sequence is DDTYD.

Belongs to the terpene synthase family. The cofactor is Mg(2+).

Probable sesquiterpene synthase. This Ricinus communis (Castor bean) protein is Probable terpene synthase 8 (TPS8).